The chain runs to 874 residues: Putative disease resistance protein At5g05400 (874 aa).

Residues 22–74 are a coiled coil; the sequence is LSRNQNRFRNLVDHVAALKKTVRQLEARRDDLLKRIKVQEDRGLNLLDEVQQW. The 296-residue stretch at 139–434 folds into the NB-ARC domain; that stretch reads AQKGPIPKVE…GQGIILGSKG (296 aa). 182 to 189 contacts ATP; the sequence is GMGGVGKT. 7 LRR repeats span residues 483 to 505, 506 to 527, 528 to 548, 552 to 574, 575 to 597, 598 to 620, and 621 to 642; these read QKNV…EDQK, AVRR…LHCP, KLET…EFLS, ILMV…SPLY, SLRF…YALR, NLLY…HDLP, and NLEV…VRQI.

Belongs to the disease resistance NB-LRR family.

Its function is as follows. Potential disease resistance protein. The polypeptide is Putative disease resistance protein At5g05400 (Arabidopsis thaliana (Mouse-ear cress)).